The sequence spans 529 residues: BTB/POZ domain-containing protein 6 (529 aa).

The BTB domain occupies 127–197 (ADVHFIVGPA…LYSDEIDLEA (71 aa)).

Homodimer and heterodimer. Interacts with cul3 via the BTB domain.

Its subcellular location is the cytoplasm. Adapter protein for the cul3 E3 ubiquitin-protein ligase complex. Involved in late neuronal development and muscle formation. This chain is BTB/POZ domain-containing protein 6 (btbd6), found in Xenopus laevis (African clawed frog).